Reading from the N-terminus, the 388-residue chain is FMRFamide neuropeptides (388 aa).

A signal peptide spans 1–21 (MVAPLLVFLFSLQLCHTTSWA). The propeptide occupies 22–172 (YVGGNSLNSN…SNHQVIRDSR (151 aa)). The interval 40 to 74 (FPAGTSNEVPEDAANGQDDNDDSQLTEPNDNNAPL) is disordered. Polar residues predominate over residues 64-74 (LTEPNDNNAPL). Residues Phe179, Phe196, Phe208, Phe219, Phe230, Phe241, Phe253, Phe265, Phe277, Phe289, Phe301, Phe313, Phe325, Phe337, Phe346, Phe359, and Phe372 each carry the phenylalanine amide modification. The disordered stretch occupies residues 360–388 (GRTPTQSSDFMRFGKSLDKSENKTSDLQK). The span at 374-388 (KSLDKSENKTSDLQK) shows a compositional bias: basic and acidic residues. A propeptide spanning residues 375-388 (SLDKSENKTSDLQK) is cleaved from the precursor.

This sequence belongs to the FARP (FMRFamide related peptide) family. In terms of tissue distribution, in the brain, expressed in 2 large cells in the lateral neurons in each optic lobe, 2 slightly bigger cells on both sides of the tritocerebrum, around 14 small cells in the dorsal area, around 13 cells in the subesophageal ganglion, and in the central brain.

It is found in the secreted. The chain is FMRFamide neuropeptides from Musca domestica (House fly).